Consider the following 91-residue polypeptide: Potassium channel toxin TstKMK (91 aa).

The signal sequence occupies residues 1–25; that stretch reads MVATNRCCVFALLFALLLVHSLTEA. Residues 26-42 constitute a propeptide that is removed on maturation; that stretch reads GKGKEILGKIKEKIIEA. One can recognise a BetaSPN-type CS-alpha/beta domain in the interval 58 to 91; the sequence is EYACPAIDKFCEDHCAAKKAVGKCDDFKCKCIKL. 3 cysteine pairs are disulfide-bonded: Cys61-Cys81, Cys68-Cys86, and Cys72-Cys88.

This sequence belongs to the long chain scorpion toxin family. Class 2 subfamily. Expressed by the venom gland.

The protein resides in the secreted. The full peptide presents antibacterial and cytotoxic activities. The synthetic C-terminus (AA 33-76) inhibits voltage-gated potassium channels Kv1.1/KCNA1, Kv1.2/KCNA2, and Kv1.3/KCNA3. This is Potassium channel toxin TstKMK from Tityus stigmurus (Brazilian scorpion).